A 622-amino-acid polypeptide reads, in one-letter code: Low affinity potassium transport system protein Kup (622 aa).

12 helical membrane passes run 9–29, 49–69, 103–123, 137–157, 165–185, 213–233, 247–267, 276–296, 337–357, 363–383, 396–416, and 419–439; these read LPAI…TSPL, VFGF…IKYL, VIMG…TPAI, PQLD…LFMI, VGKL…VLGL, VSFI…ALYA, WFTV…ALLL, PFFL…AALA, IYIP…IVSF, LAAA…ILST, LVAL…SANL, and LLSG…IMTT.

This sequence belongs to the HAK/KUP transporter (TC 2.A.72) family.

It is found in the cell inner membrane. It catalyses the reaction K(+)(in) + H(+)(in) = K(+)(out) + H(+)(out). Functionally, responsible for the low-affinity transport of potassium into the cell. Likely operates as a K(+):H(+) symporter. This is Low affinity potassium transport system protein Kup from Salmonella arizonae (strain ATCC BAA-731 / CDC346-86 / RSK2980).